The primary structure comprises 747 residues: Phosphoribosylformylglycinamidine synthase subunit PurL (747 aa).

His46 is a catalytic residue. ATP is bound by residues Tyr49 and Lys88. Residue Glu90 coordinates Mg(2+). Substrate contacts are provided by residues 91 to 94 (SHNH) and Arg113. Residue His92 is the Proton acceptor of the active site. Residue Asp114 coordinates Mg(2+). Gln237 lines the substrate pocket. Mg(2+) is bound at residue Asp265. 309–311 (ESQ) is a binding site for substrate. Positions 493 and 530 each coordinate ATP. Residue Asn531 participates in Mg(2+) binding. Residue Ser533 coordinates substrate.

This sequence belongs to the FGAMS family. In terms of assembly, monomer. Part of the FGAM synthase complex composed of 1 PurL, 1 PurQ and 2 PurS subunits.

It localises to the cytoplasm. The catalysed reaction is N(2)-formyl-N(1)-(5-phospho-beta-D-ribosyl)glycinamide + L-glutamine + ATP + H2O = 2-formamido-N(1)-(5-O-phospho-beta-D-ribosyl)acetamidine + L-glutamate + ADP + phosphate + H(+). Its pathway is purine metabolism; IMP biosynthesis via de novo pathway; 5-amino-1-(5-phospho-D-ribosyl)imidazole from N(2)-formyl-N(1)-(5-phospho-D-ribosyl)glycinamide: step 1/2. Its function is as follows. Part of the phosphoribosylformylglycinamidine synthase complex involved in the purines biosynthetic pathway. Catalyzes the ATP-dependent conversion of formylglycinamide ribonucleotide (FGAR) and glutamine to yield formylglycinamidine ribonucleotide (FGAM) and glutamate. The FGAM synthase complex is composed of three subunits. PurQ produces an ammonia molecule by converting glutamine to glutamate. PurL transfers the ammonia molecule to FGAR to form FGAM in an ATP-dependent manner. PurS interacts with PurQ and PurL and is thought to assist in the transfer of the ammonia molecule from PurQ to PurL. In Deinococcus radiodurans (strain ATCC 13939 / DSM 20539 / JCM 16871 / CCUG 27074 / LMG 4051 / NBRC 15346 / NCIMB 9279 / VKM B-1422 / R1), this protein is Phosphoribosylformylglycinamidine synthase subunit PurL.